We begin with the raw amino-acid sequence, 94 residues long: Pyrimidine/purine nucleoside phosphorylase (94 aa).

The protein belongs to the nucleoside phosphorylase PpnP family.

The enzyme catalyses a purine D-ribonucleoside + phosphate = a purine nucleobase + alpha-D-ribose 1-phosphate. It catalyses the reaction adenosine + phosphate = alpha-D-ribose 1-phosphate + adenine. It carries out the reaction cytidine + phosphate = cytosine + alpha-D-ribose 1-phosphate. The catalysed reaction is guanosine + phosphate = alpha-D-ribose 1-phosphate + guanine. The enzyme catalyses inosine + phosphate = alpha-D-ribose 1-phosphate + hypoxanthine. It catalyses the reaction thymidine + phosphate = 2-deoxy-alpha-D-ribose 1-phosphate + thymine. It carries out the reaction uridine + phosphate = alpha-D-ribose 1-phosphate + uracil. The catalysed reaction is xanthosine + phosphate = alpha-D-ribose 1-phosphate + xanthine. Its function is as follows. Catalyzes the phosphorolysis of diverse nucleosides, yielding D-ribose 1-phosphate and the respective free bases. Can use uridine, adenosine, guanosine, cytidine, thymidine, inosine and xanthosine as substrates. Also catalyzes the reverse reactions. In Pseudomonas fluorescens (strain Pf0-1), this protein is Pyrimidine/purine nucleoside phosphorylase.